Here is a 397-residue protein sequence, read N- to C-terminus: S-adenosylmethionine synthase (397 aa).

His-17 lines the ATP pocket. Position 19 (Asp-19) interacts with Mg(2+). Residue Glu-45 participates in K(+) binding. Glu-58 and Gln-101 together coordinate L-methionine. Positions 101 to 111 (QSPDIAQGVDK) are flexible loop. ATP-binding positions include 176-178 (DGK), 243-244 (RF), Asp-252, 258-259 (RK), and Lys-279. An L-methionine-binding site is contributed by Asp-252. An L-methionine-binding site is contributed by Lys-283.

Belongs to the AdoMet synthase family. Homotetramer; dimer of dimers. Mg(2+) is required as a cofactor. It depends on K(+) as a cofactor.

It localises to the cytoplasm. It carries out the reaction L-methionine + ATP + H2O = S-adenosyl-L-methionine + phosphate + diphosphate. The protein operates within amino-acid biosynthesis; S-adenosyl-L-methionine biosynthesis; S-adenosyl-L-methionine from L-methionine: step 1/1. Functionally, catalyzes the formation of S-adenosylmethionine (AdoMet) from methionine and ATP. The overall synthetic reaction is composed of two sequential steps, AdoMet formation and the subsequent tripolyphosphate hydrolysis which occurs prior to release of AdoMet from the enzyme. The protein is S-adenosylmethionine synthase of Staphylococcus aureus (strain MRSA252).